We begin with the raw amino-acid sequence, 567 residues long: MADLANEEKPAIAPPVFVFQKDKGQKSPAEQKNLSDSGEEPRGEAEAPHHGTGHPESAGEHALEPPAPAGASASTPPPPAPEAQLPPFPRELAGRSAGGSSPEGGEDSDREDGNYCPPVKRERTSSLTQFPPSQSEERSSGFRLKPPTLIHGQAPSAGLPSQKPKEQQRSVLRPAVLQAPQPKALSQTVPSSGTNGVSLPADCTGAVPAASPDTAAWRSPSEAADEVCALEEKEPQKNESSNASEEEACEKKDPATQQAFVFGQNLRDRVKLINESVDEADMENAGHPSADTPTATNYFLQYISSSLENSTNSADASSNKFVFGQNMSERVLSPPKLNEVSSDANRENAAAESGSESSSQEATPEKESLAESAAAYTKATARKCLLEKVEVITGEEAESNVLQMQCKLFVFDKTSQSWVERGRGLLRLNDMASTDDGTLQSRLVMRTQGSLRLILNTKLWAQMQIDKASEKSIRITAMDTEDQGVKVFLISASSKDTGQLYAALHHRILALRSRVEQEQEAKMPAPEPGAAPSNEEDDSDDDDVLAPSGATAAGAGDEGDGQTTGST.

The span at 1–10 shows a compositional bias: basic and acidic residues; it reads MADLANEEKP. Disordered stretches follow at residues 1–263, 332–373, and 515–567; these read MADL…FVFG, LSPP…AESA, and VEQE…TGST. At Ala-2 the chain carries N-acetylalanine. N6-acetyllysine occurs at positions 9 and 21. Over residues 39–49 the composition is skewed to basic and acidic residues; it reads EEPRGEAEAPH. Thr-75 bears the Phosphothreonine mark. Over residues 75 to 89 the composition is skewed to pro residues; sequence TPPPPAPEAQLPPFP. 3 positions are modified to phosphoserine: Ser-100, Ser-101, and Ser-108. The short motif at 117 to 125 is the Nuclear localization signal element; that stretch reads PPVKRERTS. Residue Thr-124 is modified to Phosphothreonine. 2 stretches are compositionally biased toward polar residues: residues 125–134 and 184–197; these read SSLTQFPPSQ and ALSQTVPSSGTNGV. Phosphoserine is present on Ser-126. Phosphoserine occurs at positions 219, 333, 353, 355, and 372. Positions 347-362 are enriched in low complexity; it reads ENAAAESGSESSSQEA. The 141-residue stretch at 378–518 folds into the RanBD1 domain; sequence KATARKCLLE…LALRSRVEQE (141 aa). Positions 534-544 are enriched in acidic residues; the sequence is NEEDDSDDDDV. Ser-539 is subject to Phosphoserine. Residues 549–567 are compositionally biased toward low complexity; sequence GATAAGAGDEGDGQTTGST.

In terms of assembly, interacts with CHC1 in a Ran-stimulated manner. Interacts with XPO1. Interacts (via its C-terminal R domain) with SMAD2 (dephosphorylated form via its MH1 and MH2 domains); the interaction results in the nuclear export of SMAD2 and termination of the TGF-beta signaling. Interacts (via its C-terminal R domain) with SMAD3 (dephosphorylated form via its MH1 domain); the interaction results in the nuclear export of SMAD3 and termination of the TGF-beta signaling. Post-translationally, phosphorylation at Ser-126 promotes its import into the nucleus. As to expression, widely expressed with high levels in testis and heart.

Its subcellular location is the cytoplasm. The protein resides in the nucleus. In terms of biological role, acts as a cofactor for XPO1/CRM1-mediated nuclear export, perhaps as export complex scaffolding protein. Bound to XPO1/CRM1, stabilizes the XPO1/CRM1-cargo interaction. In the absence of Ran-bound GTP prevents binding of XPO1/CRM1 to the nuclear pore complex. Binds to CHC1/RCC1 and increases the guanine nucleotide exchange activity of CHC1/RCC1. Recruits XPO1/CRM1 to CHC1/RCC1 in a Ran-dependent manner. Negative regulator of TGF-beta signaling through interaction with the R-SMAD proteins, SMAD2 and SMAD3, and mediating their nuclear export. In Homo sapiens (Human), this protein is Ran-binding protein 3 (RANBP3).